The primary structure comprises 121 residues: Phospholipase A2 homolog ECO_00035 (121 aa).

7 disulfides stabilise this stretch: Cys-25–Cys-114, Cys-27–Cys-43, Cys-42–Cys-94, Cys-48–Cys-121, Cys-49–Cys-87, Cys-56–Cys-80, and Cys-74–Cys-85. An important for membrane-damaging activities in eukaryotes and bacteria; heparin-binding region spans residues 104–116 (KKYKIYPNILCRG).

Belongs to the phospholipase A2 family. Group II subfamily. S49 sub-subfamily. As to quaternary structure, monomer. As to expression, expressed by the venom gland.

Its subcellular location is the secreted. Functionally, snake venom phospholipase A2 homolog that lacks enzymatic activity. Shows high myotoxin activities and displays edema-inducing activities. Has cytotoxic activities against HUVEC cells (LC(50)=4.9 uL) and human lung adenocarcinoma A549 cells (LC(50)=3.5 uL). The protein is Phospholipase A2 homolog ECO_00035 of Echis coloratus (Carpet viper).